We begin with the raw amino-acid sequence, 193 residues long: Selenate reductase assembly chaperone protein (193 aa).

The protein belongs to the type II DMSO reductase enzyme chaperone family.

The protein resides in the cytoplasm. Functionally, may function as a system-specific chaperone protein essential for the assembly of an active selenate reductase SerABC. The sequence is that of Selenate reductase assembly chaperone protein from Thauera selenatis.